A 263-amino-acid polypeptide reads, in one-letter code: Shikimate dehydrogenase (NADP(+)) (263 aa).

Shikimate is bound by residues 16-18 (SKS) and threonine 65. Catalysis depends on lysine 69, which acts as the Proton acceptor. Residues asparagine 90 and aspartate 105 each coordinate shikimate. Residues 125-129 (GAGGS), serine 181, and leucine 208 contribute to the NADP(+) site. Tyrosine 210 is a binding site for shikimate. An NADP(+)-binding site is contributed by glycine 230. Glutamine 237 provides a ligand contact to shikimate.

Belongs to the shikimate dehydrogenase family. In terms of assembly, homodimer.

It catalyses the reaction shikimate + NADP(+) = 3-dehydroshikimate + NADPH + H(+). It functions in the pathway metabolic intermediate biosynthesis; chorismate biosynthesis; chorismate from D-erythrose 4-phosphate and phosphoenolpyruvate: step 4/7. Involved in the biosynthesis of the chorismate, which leads to the biosynthesis of aromatic amino acids. Catalyzes the reversible NADPH linked reduction of 3-dehydroshikimate (DHSA) to yield shikimate (SA). The polypeptide is Shikimate dehydrogenase (NADP(+)) (Helicobacter pylori (strain ATCC 700392 / 26695) (Campylobacter pylori)).